An 84-amino-acid polypeptide reads, in one-letter code: U4-theraphotoxin-Hhn1a (84 aa).

Residues 1–22 form the signal peptide; the sequence is MKVTLIAILTCAAVLVLHTTAA. The propeptide occupies 23–47; sequence EELEESQLMEVGMPDTELEAVDEER. Intrachain disulfides connect Cys51/Cys65, Cys55/Cys76, and Cys70/Cys81.

This sequence belongs to the neurotoxin 12 (Hwtx-2) family. 02 (Hwtx-2) subfamily. As to expression, expressed by the venom gland.

The protein resides in the secreted. Its function is as follows. Postsynaptic neurotoxin. This is U4-theraphotoxin-Hhn1a from Cyriopagopus hainanus (Chinese bird spider).